We begin with the raw amino-acid sequence, 814 residues long: S-layer protein sap (814 aa).

The first 29 residues, 1-29 (MAKTNSYKKVIAGTMTAAMVAGVVSPVAA), serve as a signal peptide directing secretion. SLH domains are found at residues 30–93 (AGKT…DAKP), 94–150 (SFAD…KVNG), and 152–214 (PATK…AAKV). One can recognise a BIG2 domain in the interval 403 to 479 (FTSKDFKQNN…TVKDSKGKEL (77 aa)).

In terms of processing, probably glycosylated.

The protein localises to the secreted. It localises to the cell wall. The protein resides in the S-layer. In terms of biological role, the S-layer is a paracrystalline mono-layered assembly of proteins which coat the surface of bacteria. The polypeptide is S-layer protein sap (sap) (Bacillus anthracis).